A 353-amino-acid chain; its full sequence is Photosystem II protein D1 (353 aa).

Thr2 is modified (N-acetylthreonine). Thr2 carries the post-translational modification Phosphothreonine. Transmembrane regions (helical) follow at residues 29-46, 118-133, and 142-156; these read YIGW…TATS, HFLL…EWEL, and WIVV…AATA. His118 provides a ligand contact to chlorophyll a. Tyr126 lines the pheophytin a pocket. [CaMn4O5] cluster-binding residues include Asp170 and Glu189. The chain crosses the membrane as a helical span at residues 197-218; that stretch reads FHMLGVAGVFGGSLFSAMHGSL. His198 is a chlorophyll a binding site. Residues His215 and 264–265 each bind a quinone; that span reads SF. Fe cation is bound at residue His215. His272 contributes to the Fe cation binding site. Residues 274 to 288 traverse the membrane as a helical segment; it reads FLAAWPVVGIWFTAL. Positions 332, 333, 342, and 344 each coordinate [CaMn4O5] cluster. Residues 345-353 constitute a propeptide that is removed on maturation; it reads AVDAPSISG.

This sequence belongs to the reaction center PufL/M/PsbA/D family. PSII is composed of 1 copy each of membrane proteins PsbA, PsbB, PsbC, PsbD, PsbE, PsbF, PsbH, PsbI, PsbJ, PsbK, PsbL, PsbM, PsbT, PsbX, PsbY, PsbZ, Psb30/Ycf12, at least 3 peripheral proteins of the oxygen-evolving complex and a large number of cofactors. It forms dimeric complexes. The D1/D2 heterodimer binds P680, chlorophylls that are the primary electron donor of PSII, and subsequent electron acceptors. It shares a non-heme iron and each subunit binds pheophytin, quinone, additional chlorophylls, carotenoids and lipids. D1 provides most of the ligands for the Mn4-Ca-O5 cluster of the oxygen-evolving complex (OEC). There is also a Cl(-1) ion associated with D1 and D2, which is required for oxygen evolution. The PSII complex binds additional chlorophylls, carotenoids and specific lipids. is required as a cofactor. Post-translationally, tyr-161 forms a radical intermediate that is referred to as redox-active TyrZ, YZ or Y-Z. In terms of processing, C-terminally processed by CTPA; processing is essential to allow assembly of the oxygen-evolving complex and thus photosynthetic growth.

The protein resides in the plastid. Its subcellular location is the chloroplast thylakoid membrane. It carries out the reaction 2 a plastoquinone + 4 hnu + 2 H2O = 2 a plastoquinol + O2. Photosystem II (PSII) is a light-driven water:plastoquinone oxidoreductase that uses light energy to abstract electrons from H(2)O, generating O(2) and a proton gradient subsequently used for ATP formation. It consists of a core antenna complex that captures photons, and an electron transfer chain that converts photonic excitation into a charge separation. The D1/D2 (PsbA/PsbD) reaction center heterodimer binds P680, the primary electron donor of PSII as well as several subsequent electron acceptors. The sequence is that of Photosystem II protein D1 from Vicia faba (Broad bean).